Consider the following 440-residue polypeptide: MDRYQRKIGCFIQIPNLGRGQLKYVGPVDTKAGMFAGVDLLANIGKNDGSFMGKKYFQTEYPQSGLFIQLQKVASLIEKASISQTSRRTTMEPLSIPKNRSIVRLTNQFSPMDDPKSPTPMRSFRITSRHSGNQQSMDQEASDHHQQQEFGYDNREDRMEVDSILSSDRKANHNTTSDWKPDNGHMNDLNSSEVTIELREAQLTIEKLQRKQLHYKRLLDDQRMVLEEVQPTFDRYEATIQEREKEIDHLKQQLELERRQQAKQKQFFDAENEQLLAVVSQLHEEIKENEERNLSHNQPTGANEDVELLKKQLEQLRNIEDQFELHKTKWAKEREQLKMHNDSLSKEYQNLSKELFLTKPQDSSSEEVASLTKKLEEANEKIKQLEQAQAQTAVESLPIFDPPAPVDTTAGRQQWCEHCDTMGHNTAECPHHNPDNQQFF.

In terms of domain architecture, CAP-Gly spans 26–69; it reads GPVDTKAGMFAGVDLLANIGKNDGSFMGKKYFQTEYPQSGLFIQ. Phosphoserine is present on residues serine 95 and serine 110. The disordered stretch occupies residues 108-157; it reads QFSPMDDPKSPTPMRSFRITSRHSGNQQSMDQEASDHHQQQEFGYDNRED. A compositionally biased stretch (polar residues) spans 125-139; the sequence is RITSRHSGNQQSMDQ. Residues 141 to 157 show a composition bias toward basic and acidic residues; it reads ASDHHQQQEFGYDNRED. The stretch at 190–397 forms a coiled coil; it reads NSSEVTIELR…AQAQTAVESL (208 aa). The CCHC-box signature appears at 416 to 429; that stretch reads CEHCDTMGHNTAEC.

The protein localises to the cytoplasm. It is found in the cytoskeleton. Its subcellular location is the microtubule organizing center. The protein resides in the spindle pole body. It localises to the spindle. In terms of biological role, required for nuclear fusion, chromosome disjunction, and nuclear segregation during mitosis. Probably required for the formation or stabilization of microtubules during mitosis and for spindle pole body fusion during conjugation. This Saccharomyces cerevisiae (strain ATCC 204508 / S288c) (Baker's yeast) protein is Nuclear fusion protein BIK1 (BIK1).